A 348-amino-acid chain; its full sequence is Probable dual-specificity RNA methyltransferase RlmN (348 aa).

The active-site Proton acceptor is E93. A Radical SAM core domain is found at 99–333 (TEKRLTACLS…VSLRKSRGLD (235 aa)). C106 and C338 are oxidised to a cystine. Positions 113, 117, and 120 each coordinate [4Fe-4S] cluster. S-adenosyl-L-methionine is bound by residues 160 to 161 (GE), S190, 219 to 221 (SLH), and N295. The active-site S-methylcysteine intermediate is C338.

It belongs to the radical SAM superfamily. RlmN family. The cofactor is [4Fe-4S] cluster.

The protein localises to the cytoplasm. It catalyses the reaction adenosine(2503) in 23S rRNA + 2 reduced [2Fe-2S]-[ferredoxin] + 2 S-adenosyl-L-methionine = 2-methyladenosine(2503) in 23S rRNA + 5'-deoxyadenosine + L-methionine + 2 oxidized [2Fe-2S]-[ferredoxin] + S-adenosyl-L-homocysteine. It carries out the reaction adenosine(37) in tRNA + 2 reduced [2Fe-2S]-[ferredoxin] + 2 S-adenosyl-L-methionine = 2-methyladenosine(37) in tRNA + 5'-deoxyadenosine + L-methionine + 2 oxidized [2Fe-2S]-[ferredoxin] + S-adenosyl-L-homocysteine. Its function is as follows. Specifically methylates position 2 of adenine 2503 in 23S rRNA and position 2 of adenine 37 in tRNAs. The sequence is that of Probable dual-specificity RNA methyltransferase RlmN from Prochlorococcus marinus (strain AS9601).